The primary structure comprises 119 residues: Large ribosomal subunit protein bL20 (119 aa).

The protein belongs to the bacterial ribosomal protein bL20 family.

Binds directly to 23S ribosomal RNA and is necessary for the in vitro assembly process of the 50S ribosomal subunit. It is not involved in the protein synthesizing functions of that subunit. The protein is Large ribosomal subunit protein bL20 of Bordetella avium (strain 197N).